Here is a 332-residue protein sequence, read N- to C-terminus: MTISLKTAPLLEVSNLSVDFRTDGGWINAVDDVNFTLAPRETLGLVGESGSGKSVTALSLLRLHDQRNSRLGGSVRYKGEDLFTLATSRLRQIRGHEIAMVFQDPIHTLNPVLTIGRQIEEGLRLHHGLQGREARKRAIELLDRVRIPDAARRIDEYPHRMSGGQRQRVMIAIAIAGDPKILIADEPTTALDVTVQAQIMELLRNLRDELSMSVILISHDLGLVSEFADRAMVMYAGQPVETGPIDKIFDEPLHPYTEGLLSAIPDLDDDLDRLPTIPGSIPEPSRRPPGCRFAPRCTFAQASCVKPQPIMSLTGGRASRCPPRLPTEECVL.

The region spanning 11–261 is the ABC transporter domain; that stretch reads LEVSNLSVDF…PLHPYTEGLL (251 aa). 47–54 provides a ligand contact to ATP; sequence GESGSGKS.

This sequence belongs to the ABC transporter superfamily. The complex is composed of two ATP-binding proteins (BruAb2_1033 and BruAb2_1034), two transmembrane proteins (BruAb2_1031 and BruAb2_1032) and a solute-binding protein (BruAb2_1030).

The protein resides in the cell inner membrane. Functionally, probably part of an ABC transporter complex that could be involved in peptide import. Probably responsible for energy coupling to the transport system. This Brucella abortus biovar 1 (strain 9-941) protein is Putative peptide import ATP-binding protein BruAb2_1033.